The sequence spans 98 residues: NADH-ubiquinone oxidoreductase chain 4L (98 aa).

The next 3 helical transmembrane spans lie at 1 to 21, 30 to 50, and 61 to 81; these read MSMV…GLLV, LLCL…TILI, and IILL…LVMV.

This sequence belongs to the complex I subunit 4L family. As to quaternary structure, core subunit of respiratory chain NADH dehydrogenase (Complex I) which is composed of 45 different subunits.

The protein resides in the mitochondrion inner membrane. It carries out the reaction a ubiquinone + NADH + 5 H(+)(in) = a ubiquinol + NAD(+) + 4 H(+)(out). Its function is as follows. Core subunit of the mitochondrial membrane respiratory chain NADH dehydrogenase (Complex I) which catalyzes electron transfer from NADH through the respiratory chain, using ubiquinone as an electron acceptor. Part of the enzyme membrane arm which is embedded in the lipid bilayer and involved in proton translocation. The polypeptide is NADH-ubiquinone oxidoreductase chain 4L (MT-ND4L) (Pagophilus groenlandicus (Harp seal)).